Consider the following 113-residue polypeptide: Insulin (113 aa).

The N-terminal stretch at 1–24 (MAALWLQAFSLLVLMMVSWPGSQA) is a signal peptide. Disulfide bonds link cysteine 32/cysteine 99, cysteine 44/cysteine 112, and cysteine 98/cysteine 103. Positions 56-90 (DVDPLLGFLPPKAGGAVVQGGENEVTFKDQMEMMV) are cleaved as a propeptide — c peptide.

It belongs to the insulin family. In terms of assembly, heterodimer of a B chain and an A chain linked by two disulfide bonds.

Its subcellular location is the secreted. Insulin decreases blood glucose concentration. It increases cell permeability to monosaccharides, amino acids and fatty acids. It accelerates glycolysis, the pentose phosphate cycle, and glycogen synthesis in liver. In Oreochromis niloticus (Nile tilapia), this protein is Insulin (ins).